A 142-amino-acid chain; its full sequence is NADH-quinone oxidoreductase subunit A (142 aa).

Helical transmembrane passes span F8 to T28, F63 to W83, and F93 to W113.

This sequence belongs to the complex I subunit 3 family. As to quaternary structure, NDH-1 is composed of 14 different subunits. Subunits NuoA, H, J, K, L, M, N constitute the membrane sector of the complex.

It localises to the cell inner membrane. The catalysed reaction is a quinone + NADH + 5 H(+)(in) = a quinol + NAD(+) + 4 H(+)(out). Functionally, NDH-1 shuttles electrons from NADH, via FMN and iron-sulfur (Fe-S) centers, to quinones in the respiratory chain. The immediate electron acceptor for the enzyme in this species is believed to be a menaquinone. Couples the redox reaction to proton translocation (for every two electrons transferred, four hydrogen ions are translocated across the cytoplasmic membrane), and thus conserves the redox energy in a proton gradient. In Chlorobium phaeobacteroides (strain BS1), this protein is NADH-quinone oxidoreductase subunit A.